The chain runs to 145 residues: Pleckstrin homology domain-containing protein 1 (145 aa).

One can recognise a PH domain in the interval 26 to 127 (NPERSGWLTK…WINSIGRSIV (102 aa)). The binds specifically PtdIns3P stretch occupies residues 29–53 (RSGWLTKQGDYIKTWRRRWFVLKRG).

Binds PtdIns3P. As to expression, ubiquitously expressed.

Its subcellular location is the cytoplasm. Functionally, binds specifically to phosphatidylinositol 3-phosphate (PtdIns3P), but not to other phosphoinositides. The protein is Pleckstrin homology domain-containing protein 1 (PH1) of Arabidopsis thaliana (Mouse-ear cress).